Here is a 485-residue protein sequence, read N- to C-terminus: Sulfate adenylyltransferase subunit 1 (485 aa).

The tr-type G domain maps to 30 to 243 (KGLLRFLTCG…ELLETIDTQR (214 aa)). The segment at 39–46 (GSVDDGKS) is G1. GTP is bound at residue 39–46 (GSVDDGKS). The segment at 97–101 (GITID) is G2. Residues 118 to 121 (DTPG) are G3. Residues 118–122 (DTPGH) and 173–176 (NKMD) each bind GTP. A G4 region spans residues 173-176 (NKMD). The segment at 210-212 (SAL) is G5.

It belongs to the TRAFAC class translation factor GTPase superfamily. Classic translation factor GTPase family. CysN/NodQ subfamily. In terms of assembly, heterodimer composed of CysD, the smaller subunit, and CysN.

It carries out the reaction sulfate + ATP + H(+) = adenosine 5'-phosphosulfate + diphosphate. It functions in the pathway sulfur metabolism; hydrogen sulfide biosynthesis; sulfite from sulfate: step 1/3. With CysD forms the ATP sulfurylase (ATPS) that catalyzes the adenylation of sulfate producing adenosine 5'-phosphosulfate (APS) and diphosphate, the first enzymatic step in sulfur assimilation pathway. APS synthesis involves the formation of a high-energy phosphoric-sulfuric acid anhydride bond driven by GTP hydrolysis by CysN coupled to ATP hydrolysis by CysD. This chain is Sulfate adenylyltransferase subunit 1, found in Shewanella oneidensis (strain ATCC 700550 / JCM 31522 / CIP 106686 / LMG 19005 / NCIMB 14063 / MR-1).